The sequence spans 23 residues: Defensin-like protein 2 (23 aa).

At glutamine 1 the chain carries Pyrrolidone carboxylic acid.

It belongs to the DEFL family. In terms of assembly, forms oligomers in its native state.

In terms of biological role, possesses antifungal activity sensitive to inorganic cations. This chain is Defensin-like protein 2, found in Brassica napus (Rape).